The chain runs to 541 residues: Chaperonin GroEL (541 aa).

ATP-binding positions include 29–32 (TLGP), 86–90 (DGTTT), Gly-413, 477–479 (DAL), and Asp-493.

This sequence belongs to the chaperonin (HSP60) family. As to quaternary structure, forms a cylinder of 14 subunits composed of two heptameric rings stacked back-to-back. Interacts with the co-chaperonin GroES.

It localises to the cytoplasm. It catalyses the reaction ATP + H2O + a folded polypeptide = ADP + phosphate + an unfolded polypeptide.. Together with its co-chaperonin GroES, plays an essential role in assisting protein folding. The GroEL-GroES system forms a nano-cage that allows encapsulation of the non-native substrate proteins and provides a physical environment optimized to promote and accelerate protein folding. The chain is Chaperonin GroEL from Clostridium beijerinckii (strain ATCC 51743 / NCIMB 8052) (Clostridium acetobutylicum).